The following is a 176-amino-acid chain: NAD(P)H-quinone oxidoreductase subunit 6, chloroplastic (176 aa).

5 consecutive transmembrane segments (helical) span residues 10-30, 32-52, 61-81, 92-112, and 152-172; these read ILLV…VLFT, PIFS…FHIL, AQLL…VMFM, LWTV…FSLI, and FYLP…GAIA.

This sequence belongs to the complex I subunit 6 family. NDH is composed of at least 16 different subunits, 5 of which are encoded in the nucleus.

The protein localises to the plastid. It localises to the chloroplast thylakoid membrane. The enzyme catalyses a plastoquinone + NADH + (n+1) H(+)(in) = a plastoquinol + NAD(+) + n H(+)(out). The catalysed reaction is a plastoquinone + NADPH + (n+1) H(+)(in) = a plastoquinol + NADP(+) + n H(+)(out). Its function is as follows. NDH shuttles electrons from NAD(P)H:plastoquinone, via FMN and iron-sulfur (Fe-S) centers, to quinones in the photosynthetic chain and possibly in a chloroplast respiratory chain. The immediate electron acceptor for the enzyme in this species is believed to be plastoquinone. Couples the redox reaction to proton translocation, and thus conserves the redox energy in a proton gradient. The protein is NAD(P)H-quinone oxidoreductase subunit 6, chloroplastic (ndhG) of Drimys granadensis.